Reading from the N-terminus, the 216-residue chain is MVMTIEALKHLGRVDESRVGRTEPLPLDNRHYVNGHPLCDSFPGLALIQFGLGCFWGAERLFWQLPGVFSTAAGYAGGGVPYPTYREVCSGETGHAEVVLVVYDHTVISFEQLLQTFWESHDPTQGMRQGNDIGTQYRSVIHCTTSEQYAAASASREVYQQQLNTAGYTAITTEILHPAPPFYYAENEHQQYLAKHPNGYCGLGGTGVTCAIRLQV.

The active site involves cysteine 54.

The protein belongs to the MsrA Met sulfoxide reductase family.

The enzyme catalyses L-methionyl-[protein] + [thioredoxin]-disulfide + H2O = L-methionyl-(S)-S-oxide-[protein] + [thioredoxin]-dithiol. The catalysed reaction is [thioredoxin]-disulfide + L-methionine + H2O = L-methionine (S)-S-oxide + [thioredoxin]-dithiol. Has an important function as a repair enzyme for proteins that have been inactivated by oxidation. Catalyzes the reversible oxidation-reduction of methionine sulfoxide in proteins to methionine. This is Peptide methionine sulfoxide reductase MsrA from Xylella fastidiosa (strain Temecula1 / ATCC 700964).